A 309-amino-acid polypeptide reads, in one-letter code: Pyrroline-5-carboxylate reductase 1, mitochondrial (309 aa).

Residue Ser-2 is modified to N-acetylserine. Residues 6-11 (IGAGQL) and Ser-34 contribute to the NADP(+) site. Residues Ala-8, Gln-10, Leu-11, Ser-34, Asp-36, Asn-56, Val-70, Lys-71, and Ala-97 each coordinate NADPH. NADP(+)-binding positions include Asn-56, 69-72 (AVKP), and 95-97 (CAA). Glu-164 lines the L-proline pocket. Asn-230 is a binding site for NADPH. 2 residues coordinate L-proline: Ala-237 and Thr-238. A phosphoserine mark is found at Ser-278 and Ser-301.

It belongs to the pyrroline-5-carboxylate reductase family. Homodecamer; composed of 5 homodimers. Interacts with LTO1. In terms of tissue distribution, highly expressed in osteoblasts and skin.

The protein resides in the mitochondrion. It carries out the reaction L-proline + NADP(+) = (S)-1-pyrroline-5-carboxylate + NADPH + 2 H(+). The enzyme catalyses L-proline + NAD(+) = (S)-1-pyrroline-5-carboxylate + NADH + 2 H(+). It participates in amino-acid biosynthesis; L-proline biosynthesis; L-proline from L-glutamate 5-semialdehyde: step 1/1. Oxidoreductase that catalyzes the last step in proline biosynthesis, which corresponds to the reduction of pyrroline-5-carboxylate to L-proline using NAD(P)H. At physiologic concentrations, has higher specific activity in the presence of NADH. Involved in the cellular response to oxidative stress. The sequence is that of Pyrroline-5-carboxylate reductase 1, mitochondrial from Mus musculus (Mouse).